Reading from the N-terminus, the 304-residue chain is Nucleotide-binding protein ROP_69550 (304 aa).

An ATP-binding site is contributed by 24 to 31 (GLSGAGLQ). Residue 75-78 (DVRS) coordinates GTP.

It belongs to the RapZ-like family.

Functionally, displays ATPase and GTPase activities. The polypeptide is Nucleotide-binding protein ROP_69550 (Rhodococcus opacus (strain B4)).